A 268-amino-acid polypeptide reads, in one-letter code: Tryptophan synthase alpha chain (268 aa).

Catalysis depends on proton acceptor residues Glu-49 and Asp-60.

The protein belongs to the TrpA family. As to quaternary structure, tetramer of two alpha and two beta chains.

It catalyses the reaction (1S,2R)-1-C-(indol-3-yl)glycerol 3-phosphate + L-serine = D-glyceraldehyde 3-phosphate + L-tryptophan + H2O. It functions in the pathway amino-acid biosynthesis; L-tryptophan biosynthesis; L-tryptophan from chorismate: step 5/5. The alpha subunit is responsible for the aldol cleavage of indoleglycerol phosphate to indole and glyceraldehyde 3-phosphate. In Escherichia coli O7:K1 (strain IAI39 / ExPEC), this protein is Tryptophan synthase alpha chain.